Consider the following 289-residue polypeptide: BTB/POZ domain-containing protein KCTD7 (289 aa).

Positions 1–40 (MVVVTGREPDSRRPDGAMSSSDAEDDFLEPATPTATQAGH) are disordered. Residues 53-141 (VPLNIGGAHF…YAIGPLLEQL (89 aa)) enclose the BTB domain.

In terms of assembly, interacts with CUL3.

It localises to the cell membrane. The protein resides in the cytoplasm. It is found in the cytosol. May be involved in the control of excitability of cortical neurons. This Bos taurus (Bovine) protein is BTB/POZ domain-containing protein KCTD7 (KCTD7).